A 55-amino-acid polypeptide reads, in one-letter code: uncharacterized protein (55 aa).

Transmembrane regions (helical) follow at residues 2 to 19 (VIGLFVLSIVMLIVSFIA) and 24 to 46 (LLSIMISFLLFTSAVVLAMFRYF).

The protein localises to the cell membrane. This is an uncharacterized protein from Alkalihalophilus pseudofirmus (strain ATCC BAA-2126 / JCM 17055 / OF4) (Bacillus pseudofirmus).